The sequence spans 363 residues: Probable aminomethyltransferase (363 aa).

This sequence belongs to the GcvT family. As to quaternary structure, the glycine cleavage system is composed of four proteins: P, T, L and H.

The enzyme catalyses N(6)-[(R)-S(8)-aminomethyldihydrolipoyl]-L-lysyl-[protein] + (6S)-5,6,7,8-tetrahydrofolate = N(6)-[(R)-dihydrolipoyl]-L-lysyl-[protein] + (6R)-5,10-methylene-5,6,7,8-tetrahydrofolate + NH4(+). Its function is as follows. The glycine cleavage system catalyzes the degradation of glycine. The protein is Probable aminomethyltransferase of Haloarcula marismortui (strain ATCC 43049 / DSM 3752 / JCM 8966 / VKM B-1809) (Halobacterium marismortui).